The chain runs to 134 residues: Lymphocyte antigen 6 complex locus protein G6d (134 aa).

An N-terminal signal peptide occupies residues 1–19 (MNSQLIGILFSALLGAALG). Positions 22–121 (MRCYDCGGGP…ASSSTPLCIL (100 aa)) constitute a UPAR/Ly6 domain. 5 disulfides stabilise this stretch: C24/C48, C27/C35, C42/C76, C82/C101, and C102/C107. T68 carries an O-linked (GalNAc...) threonine glycan. N108 carries GPI-anchor amidated asparagine lipidation. The propeptide at 109–134 (GAVASSSTPLCILAAVTTLAWLLSGQ) is removed in mature form.

In terms of assembly, homodimer. In terms of processing, O-glycosylated.

Its subcellular location is the cell membrane. The sequence is that of Lymphocyte antigen 6 complex locus protein G6d (Ly6g6d) from Rattus norvegicus (Rat).